The following is a 320-amino-acid chain: Lipoyl synthase (320 aa).

[4Fe-4S] cluster is bound by residues cysteine 67, cysteine 72, cysteine 78, cysteine 93, cysteine 97, cysteine 100, and serine 307. The 218-residue stretch at 79 to 296 folds into the Radical SAM core domain; it reads FNHGTATFMI…RDKANEMGFE (218 aa).

Belongs to the radical SAM superfamily. Lipoyl synthase family. Requires [4Fe-4S] cluster as cofactor.

It is found in the cytoplasm. It catalyses the reaction [[Fe-S] cluster scaffold protein carrying a second [4Fe-4S](2+) cluster] + N(6)-octanoyl-L-lysyl-[protein] + 2 oxidized [2Fe-2S]-[ferredoxin] + 2 S-adenosyl-L-methionine + 4 H(+) = [[Fe-S] cluster scaffold protein] + N(6)-[(R)-dihydrolipoyl]-L-lysyl-[protein] + 4 Fe(3+) + 2 hydrogen sulfide + 2 5'-deoxyadenosine + 2 L-methionine + 2 reduced [2Fe-2S]-[ferredoxin]. It functions in the pathway protein modification; protein lipoylation via endogenous pathway; protein N(6)-(lipoyl)lysine from octanoyl-[acyl-carrier-protein]: step 2/2. In terms of biological role, catalyzes the radical-mediated insertion of two sulfur atoms into the C-6 and C-8 positions of the octanoyl moiety bound to the lipoyl domains of lipoate-dependent enzymes, thereby converting the octanoylated domains into lipoylated derivatives. The protein is Lipoyl synthase of Haemophilus influenzae (strain ATCC 51907 / DSM 11121 / KW20 / Rd).